A 572-amino-acid chain; its full sequence is AAA ATPase forming ring-shaped complexes (572 aa).

The disordered stretch occupies residues 1-22; that stretch reads MTEPRHESGSAAPQRPATDPVQ. Positions 21–67 form a coiled coil; it reads VQRQVNLLRDQKRNLDKQAAALASQNEKLVRLLNASRQEIVGLKKTL. 270-275 contacts ATP; it reads GNGKTL. Residues 527 to 539 are compositionally biased toward acidic residues; sequence HEQQDLPDTEDSE. A disordered region spans residues 527-572; sequence HEQQDLPDTEDSEDWARLTGRRGDTIDSVHMASHRPQGEPGPGATP.

Belongs to the AAA ATPase family. As to quaternary structure, homohexamer. Assembles into a hexameric ring structure.

This chain is AAA ATPase forming ring-shaped complexes, found in Kocuria rhizophila (strain ATCC 9341 / DSM 348 / NBRC 103217 / DC2201).